A 493-amino-acid chain; its full sequence is MVPVVALVGRPNVGKSTLFNRLTRTRDALVADFPGLTRDRKYGHAHFSEHDFIVIDTGGIDGTEEGVETKMAEQSLAAIDEADVVLFMVDGRAGLTPSDVAIAKHLRQLEKPSMLVVNKVDGIDPDAASADFWQLGVEDMYQIAAAHGRGVTALIDLALNPFAEALKAENGEVSDLTEFEDEEEEQVDFTEEEAEEEFKRLQDQPIKLAIIGRPNVGKSTLTNRILGEERVVVYDMPGTTRDSIYIPMQRDEREYVLIDTAGVRRRKNINETVEKFSVVKTLKAIEDANVVLLLIDARENISDQDLSLLGFALNAGRSIVIAVNKWDGLDNDVKDRVKKELDRRLGFVDFARIHFISALHGTGVGHLFESVQEAYKSATTRVGTSVLTRIMKMATDDHQPPMVRGRRVKLKYAHAGGYNPPIIVIHGNQVRNLPDSYKRFLMNYYRRSLEIMGTPIRIQFQNSENPFEAKTNKLTISQERKRKRMMSMVKGRK.

EngA-type G domains lie at 3 to 166 (PVVA…AEAL) and 206 to 379 (IKLA…KSAT). GTP contacts are provided by residues 9-16 (GRPNVGKS), 56-60 (DTGGI), 118-121 (NKVD), 212-219 (GRPNVGKS), 259-263 (DTAGV), and 324-327 (NKWD). Residues 380–464 (TRVGTSVLTR…PIRIQFQNSE (85 aa)) enclose the KH-like domain.

The protein belongs to the TRAFAC class TrmE-Era-EngA-EngB-Septin-like GTPase superfamily. EngA (Der) GTPase family. In terms of assembly, associates with the 50S ribosomal subunit.

Its function is as follows. GTPase that plays an essential role in the late steps of ribosome biogenesis. In Vibrio atlanticus (strain LGP32) (Vibrio splendidus (strain Mel32)), this protein is GTPase Der.